The sequence spans 133 residues: Small ribosomal subunit protein uS8 (133 aa).

It belongs to the universal ribosomal protein uS8 family. Part of the 30S ribosomal subunit. Contacts proteins S5 and S12.

Its function is as follows. One of the primary rRNA binding proteins, it binds directly to 16S rRNA central domain where it helps coordinate assembly of the platform of the 30S subunit. In Prochlorococcus marinus (strain MIT 9515), this protein is Small ribosomal subunit protein uS8.